Here is a 464-residue protein sequence, read N- to C-terminus: Cysteine--tRNA ligase (464 aa).

C29 serves as a coordination point for Zn(2+). The 'HIGH' region signature appears at 31–41; it reads ATVQGDPHIGH. The Zn(2+) site is built by C207, H232, and E236. The 'KMSKS' region motif lies at 263–267; that stretch reads KMSKS. ATP is bound at residue K266.

The protein belongs to the class-I aminoacyl-tRNA synthetase family. In terms of assembly, monomer. The cofactor is Zn(2+).

Its subcellular location is the cytoplasm. The catalysed reaction is tRNA(Cys) + L-cysteine + ATP = L-cysteinyl-tRNA(Cys) + AMP + diphosphate. In Rhodococcus opacus (strain B4), this protein is Cysteine--tRNA ligase.